The chain runs to 389 residues: Chromobox protein homolog 8 (389 aa).

Residues 11–69 (FAAEALLKRRIRKGRMEYLVKWKGWSQKYSTWEPEENILDARLLAAFEEREREMELYGP) enclose the Chromo domain. Serine 110 and serine 130 each carry phosphoserine. The tract at residues 124 to 241 (LRNMGLSPPA…DDTPSGAGKF (118 aa)) is disordered. The segment covering 145–189 (EAPRDRDRDRDRDRERDRERERERERERERERERERGTSRVDDKP) has biased composition (basic and acidic residues). Residues serine 191, serine 256, serine 265, serine 311, serine 332, and serine 352 each carry the phosphoserine modification. The tract at residues 298 to 327 (GALDPNGTRVRHGSGPPSSGGGLYRDMGAQ) is disordered.

Component of a PRC1-like complex. Interacts with RING1 RNF2, PCGF1, PCGF2, PCGF3, BMI1, PCGF5 and PCGF6. Interacts with MLLT3 and histone H3. Interacts with PHC2.

The protein localises to the nucleus. In terms of biological role, component of a Polycomb group (PcG) multiprotein PRC1-like complex, a complex class required to maintain the transcriptionally repressive state of many genes, including Hox genes, throughout development. PcG PRC1 complex acts via chromatin remodeling and modification of histones; it mediates monoubiquitination of histone H2A 'Lys-119', rendering chromatin heritably changed in its expressibility. The sequence is that of Chromobox protein homolog 8 (CBX8) from Homo sapiens (Human).